The sequence spans 240 residues: Acyl-coenzyme A thioesterase THEM4 (240 aa).

Residues 1–36 (MLRSCAARLRTLGALCLPPVGRRLPGSEPRPELRSF) constitute a mitochondrion transit peptide. Phosphoserine occurs at positions 37 and 38. 2 positions are modified to N6-succinyllysine: lysine 55 and lysine 66. At lysine 74 the chain carries N6-acetyllysine. An N6-succinyllysine modification is found at lysine 98. Aspartate 161 serves as the catalytic Proton donor/acceptor. Substrate-binding positions include asparagine 183, lysine 185, and 206-207 (RK). Lysine 207 carries the N6-succinyllysine modification.

Belongs to the THEM4/THEM5 thioesterase family. In terms of assembly, homodimer and homotetramer. Interacts with AKT1 in the cytosol. Post-translationally, phosphorylated. Expressed predominantly in skeletal muscle, testis, uterus, brain and kidney. Down-regulated in glioblastoma or glioma compared to non-neoplastic brain due to promoter hypermethylation.

The protein localises to the cell membrane. It is found in the cell projection. The protein resides in the ruffle membrane. Its subcellular location is the cytoplasm. It localises to the mitochondrion. The protein localises to the mitochondrion inner membrane. It is found in the mitochondrion intermembrane space. It catalyses the reaction hexadecanoyl-CoA + H2O = hexadecanoate + CoA + H(+). It carries out the reaction octanoyl-CoA + H2O = octanoate + CoA + H(+). The catalysed reaction is decanoyl-CoA + H2O = decanoate + CoA + H(+). The enzyme catalyses dodecanoyl-CoA + H2O = dodecanoate + CoA + H(+). It catalyses the reaction tetradecanoyl-CoA + H2O = tetradecanoate + CoA + H(+). It carries out the reaction (9Z)-octadecenoyl-CoA + H2O = (9Z)-octadecenoate + CoA + H(+). The catalysed reaction is (5Z,8Z,11Z,14Z)-eicosatetraenoyl-CoA + H2O = (5Z,8Z,11Z,14Z)-eicosatetraenoate + CoA + H(+). Functionally, has acyl-CoA thioesterase activity towards medium and long-chain (C14 to C18) fatty acyl-CoA substrates, and probably plays a role in mitochondrial fatty acid metabolism. Plays a role in the apoptotic process, possibly via its regulation of AKT1 activity. According to PubMed:11598301, inhibits AKT1 phosphorylation and activity. According to PubMed:17615157, enhances AKT1 activity by favoring its phosphorylation and translocation to plasma membrane. This chain is Acyl-coenzyme A thioesterase THEM4 (THEM4), found in Homo sapiens (Human).